Consider the following 61-residue polypeptide: Alpha-conotoxin-like PnMGMR-02 (61 aa).

Residues 1-21 form the signal peptide; it reads MGMRMMFTVFLLVVLATTVVS. Positions 22–44 are excised as a propeptide; the sequence is FTSDRASDGGNAAASDLIALTIK. Intrachain disulfides connect Cys46–Cys52 and Cys47–Cys60. Residues 48–50 are ser-Xaa-Pro motif, crucial for potent interaction with nAChR; the sequence is SRP. Cysteine amide is present on Cys60.

This sequence belongs to the conotoxin A superfamily. As to expression, expressed by the venom duct.

The protein resides in the secreted. In terms of biological role, alpha-conotoxins act on postsynaptic membranes, they bind to the nicotinic acetylcholine receptors (nAChR) and thus inhibit them. This toxin blocks mammalian nAChRs (alpha-7 &gt; alpha-3/beta-2). This Conus pennaceus (Feathered cone) protein is Alpha-conotoxin-like PnMGMR-02.